A 561-amino-acid chain; its full sequence is DNA ligase B (561 aa).

The active-site N6-AMP-lysine intermediate is lysine 128.

The protein belongs to the NAD-dependent DNA ligase family. LigB subfamily.

The enzyme catalyses NAD(+) + (deoxyribonucleotide)n-3'-hydroxyl + 5'-phospho-(deoxyribonucleotide)m = (deoxyribonucleotide)n+m + AMP + beta-nicotinamide D-nucleotide.. Its function is as follows. Catalyzes the formation of phosphodiester linkages between 5'-phosphoryl and 3'-hydroxyl groups in double-stranded DNA using NAD as a coenzyme and as the energy source for the reaction. In Pseudomonas syringae pv. syringae (strain B728a), this protein is DNA ligase B.